Reading from the N-terminus, the 501-residue chain is Probable cytosol aminopeptidase (501 aa).

Mn(2+)-binding residues include Lys-268 and Asp-273. Lys-280 is an active-site residue. Mn(2+)-binding residues include Asp-291, Asp-350, and Glu-352. Arg-354 is a catalytic residue.

Belongs to the peptidase M17 family. Mn(2+) is required as a cofactor.

It localises to the cytoplasm. The catalysed reaction is Release of an N-terminal amino acid, Xaa-|-Yaa-, in which Xaa is preferably Leu, but may be other amino acids including Pro although not Arg or Lys, and Yaa may be Pro. Amino acid amides and methyl esters are also readily hydrolyzed, but rates on arylamides are exceedingly low.. It carries out the reaction Release of an N-terminal amino acid, preferentially leucine, but not glutamic or aspartic acids.. Its function is as follows. Presumably involved in the processing and regular turnover of intracellular proteins. Catalyzes the removal of unsubstituted N-terminal amino acids from various peptides. This is Probable cytosol aminopeptidase from Colwellia psychrerythraea (strain 34H / ATCC BAA-681) (Vibrio psychroerythus).